A 687-amino-acid chain; its full sequence is Light-independent protochlorophyllide reductase subunit B (687 aa).

Residue Asp36 participates in [4Fe-4S] cluster binding. The active-site Proton donor is Asp441. Gly576–Met577 provides a ligand contact to substrate.

Belongs to the ChlB/BchB/BchZ family. As to quaternary structure, protochlorophyllide reductase is composed of three subunits; ChlL, ChlN and ChlB. Forms a heterotetramer of two ChlB and two ChlN subunits. [4Fe-4S] cluster is required as a cofactor.

It is found in the plastid. Its subcellular location is the chloroplast. It carries out the reaction chlorophyllide a + oxidized 2[4Fe-4S]-[ferredoxin] + 2 ADP + 2 phosphate = protochlorophyllide a + reduced 2[4Fe-4S]-[ferredoxin] + 2 ATP + 2 H2O. The protein operates within porphyrin-containing compound metabolism; chlorophyll biosynthesis (light-independent). Functionally, component of the dark-operative protochlorophyllide reductase (DPOR) that uses Mg-ATP and reduced ferredoxin to reduce ring D of protochlorophyllide (Pchlide) to form chlorophyllide a (Chlide). This reaction is light-independent. The NB-protein (ChlN-ChlB) is the catalytic component of the complex. The protein is Light-independent protochlorophyllide reductase subunit B of Chlamydomonas reinhardtii (Chlamydomonas smithii).